The chain runs to 161 residues: CASP-like protein 1C2 (161 aa).

Over 1–7 (MAKNTDR) the chain is Cytoplasmic. The helical transmembrane segment at 8–28 (ICFLVLRLLAFGATLSAAIVM) threads the bilayer. The Extracellular portion of the chain corresponds to 29 to 53 (ATSHERTTYLSLSIEAKYSHTPAFK). A helical membrane pass occupies residues 54-74 (YFVIANAIGSAYSLLLLFLPS). Over 75 to 86 (HGSLWPLVIASD) the chain is Cytoplasmic. A helical membrane pass occupies residues 87-107 (VVITMFLTSSISAALSIAYVG). The Extracellular segment spans residues 108–131 (KKGNSYAGWLPICDQVPNYCNHVT). A helical transmembrane segment spans residues 132–152 (GALAAGFIGVVLYMVLLQYSI). Over 153–161 (YTKCCKSSS) the chain is Cytoplasmic.

This sequence belongs to the Casparian strip membrane proteins (CASP) family. As to quaternary structure, homodimer and heterodimers.

Its subcellular location is the cell membrane. This chain is CASP-like protein 1C2, found in Vitis vinifera (Grape).